The sequence spans 59 residues: Small, acid-soluble spore protein H 2 (59 aa).

It belongs to the SspH family.

The protein resides in the spore core. The sequence is that of Small, acid-soluble spore protein H 2 (sspH2) from Bacillus cereus (strain ATCC 14579 / DSM 31 / CCUG 7414 / JCM 2152 / NBRC 15305 / NCIMB 9373 / NCTC 2599 / NRRL B-3711).